A 344-amino-acid chain; its full sequence is Holliday junction branch migration complex subunit RuvB (344 aa).

Positions 1–185 are large ATPase domain (RuvB-L); it reads MSTSRSDALK…FGIDFRYDYY (185 aa). ATP is bound by residues Leu24, Arg25, Gly66, Lys69, Thr70, Thr71, 132–134, Arg175, Tyr185, and Arg222; that span reads EDY. Thr70 contacts Mg(2+). The tract at residues 186–256 is small ATPAse domain (RuvB-S); that stretch reads TADLLQEITQ…IADRALNALD (71 aa). The tract at residues 259-344 is head domain (RuvB-H); it reads EEGLDDMDAR…AADQDLFDQE (86 aa). Arg314 and Arg319 together coordinate DNA.

It belongs to the RuvB family. Homohexamer. Forms an RuvA(8)-RuvB(12)-Holliday junction (HJ) complex. HJ DNA is sandwiched between 2 RuvA tetramers; dsDNA enters through RuvA and exits via RuvB. An RuvB hexamer assembles on each DNA strand where it exits the tetramer. Each RuvB hexamer is contacted by two RuvA subunits (via domain III) on 2 adjacent RuvB subunits; this complex drives branch migration. In the full resolvosome a probable DNA-RuvA(4)-RuvB(12)-RuvC(2) complex forms which resolves the HJ.

The protein localises to the cytoplasm. It carries out the reaction ATP + H2O = ADP + phosphate + H(+). Functionally, the RuvA-RuvB-RuvC complex processes Holliday junction (HJ) DNA during genetic recombination and DNA repair, while the RuvA-RuvB complex plays an important role in the rescue of blocked DNA replication forks via replication fork reversal (RFR). RuvA specifically binds to HJ cruciform DNA, conferring on it an open structure. The RuvB hexamer acts as an ATP-dependent pump, pulling dsDNA into and through the RuvAB complex. RuvB forms 2 homohexamers on either side of HJ DNA bound by 1 or 2 RuvA tetramers; 4 subunits per hexamer contact DNA at a time. Coordinated motions by a converter formed by DNA-disengaged RuvB subunits stimulates ATP hydrolysis and nucleotide exchange. Immobilization of the converter enables RuvB to convert the ATP-contained energy into a lever motion, pulling 2 nucleotides of DNA out of the RuvA tetramer per ATP hydrolyzed, thus driving DNA branch migration. The RuvB motors rotate together with the DNA substrate, which together with the progressing nucleotide cycle form the mechanistic basis for DNA recombination by continuous HJ branch migration. Branch migration allows RuvC to scan DNA until it finds its consensus sequence, where it cleaves and resolves cruciform DNA. This Salinibacter ruber (strain DSM 13855 / M31) protein is Holliday junction branch migration complex subunit RuvB.